The sequence spans 177 residues: Peptide deformylase 2 (177 aa).

Residues Cys99 and His141 each coordinate Fe cation. Residue Glu142 is part of the active site. A Fe cation-binding site is contributed by His145.

It belongs to the polypeptide deformylase family. Requires Fe(2+) as cofactor.

It carries out the reaction N-terminal N-formyl-L-methionyl-[peptide] + H2O = N-terminal L-methionyl-[peptide] + formate. In terms of biological role, removes the formyl group from the N-terminal Met of newly synthesized proteins. Requires at least a dipeptide for an efficient rate of reaction. N-terminal L-methionine is a prerequisite for activity but the enzyme has broad specificity at other positions. This Ralstonia nicotianae (strain ATCC BAA-1114 / GMI1000) (Ralstonia solanacearum) protein is Peptide deformylase 2.